The following is a 554-amino-acid chain: 2-succinyl-5-enolpyruvyl-6-hydroxy-3-cyclohexene-1-carboxylate synthase (554 aa).

Belongs to the TPP enzyme family. MenD subfamily. In terms of assembly, homodimer. Mg(2+) is required as a cofactor. Mn(2+) serves as cofactor. Requires thiamine diphosphate as cofactor.

The enzyme catalyses isochorismate + 2-oxoglutarate + H(+) = 5-enolpyruvoyl-6-hydroxy-2-succinyl-cyclohex-3-ene-1-carboxylate + CO2. The protein operates within quinol/quinone metabolism; 1,4-dihydroxy-2-naphthoate biosynthesis; 1,4-dihydroxy-2-naphthoate from chorismate: step 2/7. It functions in the pathway quinol/quinone metabolism; menaquinone biosynthesis. Its function is as follows. Catalyzes the thiamine diphosphate-dependent decarboxylation of 2-oxoglutarate and the subsequent addition of the resulting succinic semialdehyde-thiamine pyrophosphate anion to isochorismate to yield 2-succinyl-5-enolpyruvyl-6-hydroxy-3-cyclohexene-1-carboxylate (SEPHCHC). The protein is 2-succinyl-5-enolpyruvyl-6-hydroxy-3-cyclohexene-1-carboxylate synthase of Lactococcus lactis subsp. cremoris (strain SK11).